Consider the following 142-residue polypeptide: Hemoglobin subunit alpha (142 aa).

The region spanning 2–142 is the Globin domain; it reads VLSPDDKKHV…VSTVLTSKYR (141 aa). S4 carries the post-translational modification Phosphoserine. N6-succinyllysine occurs at positions 8 and 12. K17 carries the post-translational modification N6-acetyllysine; alternate. K17 carries the N6-succinyllysine; alternate modification. Residue Y25 is modified to Phosphotyrosine. S36 carries the post-translational modification Phosphoserine. The residue at position 41 (K41) is an N6-succinyllysine. S50 is modified (phosphoserine). O2 is bound at residue H59. Heme b is bound at residue H88. Phosphoserine is present on S103. T109 bears the Phosphothreonine mark. S125 and S132 each carry phosphoserine. 2 positions are modified to phosphothreonine: T135 and T138. S139 is subject to Phosphoserine.

Belongs to the globin family. In terms of assembly, heterotetramer of two alpha chains and two beta chains. In terms of tissue distribution, red blood cells.

In terms of biological role, involved in oxygen transport from the lung to the various peripheral tissues. Functionally, hemopressin acts as an antagonist peptide of the cannabinoid receptor CNR1. Hemopressin-binding efficiently blocks cannabinoid receptor CNR1 and subsequent signaling. The chain is Hemoglobin subunit alpha (HBA) from Papio anubis (Olive baboon).